We begin with the raw amino-acid sequence, 158 residues long: Large ribosomal subunit protein uL11 (158 aa).

Belongs to the universal ribosomal protein uL11 family. In terms of assembly, part of the ribosomal stalk of the 50S ribosomal subunit. Interacts with L10 and the large rRNA to form the base of the stalk. L10 forms an elongated spine to which L12 dimers bind in a sequential fashion forming a multimeric L10(L12)X complex.

Its function is as follows. Forms part of the ribosomal stalk which helps the ribosome interact with GTP-bound translation factors. In Methanocella arvoryzae (strain DSM 22066 / NBRC 105507 / MRE50), this protein is Large ribosomal subunit protein uL11.